A 423-amino-acid polypeptide reads, in one-letter code: GTPase Obg (423 aa).

The Obg domain occupies 1 to 158; sequence MFIDTARIYI…MWVRLELKLL (158 aa). The OBG-type G domain maps to 159-329; that stretch reads ADVGLIGFPN…LLDKTIEILS (171 aa). Residues 165 to 172, 190 to 194, 211 to 214, 281 to 284, and 310 to 312 each bind GTP; these read GFPNAGKS, FTTLT, DIPG, NKID, and SAL. Mg(2+)-binding residues include S172 and T192. One can recognise an OCT domain in the interval 346–423; it reads TPPEEEETLN…VRDFEFEYYE (78 aa).

It belongs to the TRAFAC class OBG-HflX-like GTPase superfamily. OBG GTPase family. Monomer. Mg(2+) serves as cofactor.

It localises to the cytoplasm. An essential GTPase which binds GTP, GDP and possibly (p)ppGpp with moderate affinity, with high nucleotide exchange rates and a fairly low GTP hydrolysis rate. Plays a role in control of the cell cycle, stress response, ribosome biogenesis and in those bacteria that undergo differentiation, in morphogenesis control. This Thermoanaerobacter pseudethanolicus (strain ATCC 33223 / 39E) (Clostridium thermohydrosulfuricum) protein is GTPase Obg.